A 151-amino-acid chain; its full sequence is 3-dehydroquinate dehydratase (151 aa).

Tyrosine 24 acts as the Proton acceptor in catalysis. 3 residues coordinate substrate: asparagine 76, histidine 82, and aspartate 89. The active-site Proton donor is histidine 102. Substrate-binding positions include 103-104 (VS) and arginine 113.

The protein belongs to the type-II 3-dehydroquinase family. As to quaternary structure, homododecamer.

The enzyme catalyses 3-dehydroquinate = 3-dehydroshikimate + H2O. It functions in the pathway metabolic intermediate biosynthesis; chorismate biosynthesis; chorismate from D-erythrose 4-phosphate and phosphoenolpyruvate: step 3/7. Its function is as follows. Catalyzes a trans-dehydration via an enolate intermediate. This chain is 3-dehydroquinate dehydratase, found in Rhodopseudomonas palustris (strain HaA2).